The sequence spans 404 residues: CCA-adding enzyme (404 aa).

Positions 27 and 30 each coordinate ATP. Positions 27 and 30 each coordinate CTP. Mg(2+) is bound by residues D40 and D42. ATP is bound by residues R111, D154, R157, R160, and R163. 5 residues coordinate CTP: R111, D154, R157, R160, and R163.

Belongs to the tRNA nucleotidyltransferase/poly(A) polymerase family. Bacterial CCA-adding enzyme type 3 subfamily. In terms of assembly, homodimer. It depends on Mg(2+) as a cofactor.

It catalyses the reaction a tRNA precursor + 2 CTP + ATP = a tRNA with a 3' CCA end + 3 diphosphate. The enzyme catalyses a tRNA with a 3' CCA end + 2 CTP + ATP = a tRNA with a 3' CCACCA end + 3 diphosphate. Its function is as follows. Catalyzes the addition and repair of the essential 3'-terminal CCA sequence in tRNAs without using a nucleic acid template. Adds these three nucleotides in the order of C, C, and A to the tRNA nucleotide-73, using CTP and ATP as substrates and producing inorganic pyrophosphate. tRNA 3'-terminal CCA addition is required both for tRNA processing and repair. Also involved in tRNA surveillance by mediating tandem CCA addition to generate a CCACCA at the 3' terminus of unstable tRNAs. While stable tRNAs receive only 3'-terminal CCA, unstable tRNAs are marked with CCACCA and rapidly degraded. The polypeptide is CCA-adding enzyme (Geobacillus kaustophilus (strain HTA426)).